The primary structure comprises 148 residues: Lysozyme C (148 aa).

An N-terminal signal peptide occupies residues 1-18; the sequence is MKALLLLGLLLLSVTVQG. The region spanning 19–148 is the C-type lysozyme domain; it reads KIFERCDLAR…VSQYVRNCGV (130 aa). 4 disulfides stabilise this stretch: Cys24–Cys146, Cys48–Cys134, Cys83–Cys99, and Cys95–Cys113. Catalysis depends on residues Glu53 and Asp71.

Belongs to the glycosyl hydrolase 22 family. Monomer.

It catalyses the reaction Hydrolysis of (1-&gt;4)-beta-linkages between N-acetylmuramic acid and N-acetyl-D-glucosamine residues in a peptidoglycan and between N-acetyl-D-glucosamine residues in chitodextrins.. Its function is as follows. Lysozymes have primarily a bacteriolytic function; those in tissues and body fluids are associated with the monocyte-macrophage system and enhance the activity of immunoagents. In Halichoerus grypus (Gray seal), this protein is Lysozyme C (LYZ).